Here is a 424-residue protein sequence, read N- to C-terminus: Probable serine/threonine-protein kinase PBL6 (424 aa).

The interval 1–26 (MGCFGRTPKSNKRSDTKTTKNNDFTP) is disordered. A lipid anchor (N-myristoyl glycine) is attached at Gly-2. A lipid anchor (S-palmitoyl cysteine) is attached at Cys-3. Position 87 is a phosphothreonine (Thr-87). Positions 98 to 377 (FKSDCFLGEG…VVMALDHLAS (280 aa)) constitute a Protein kinase domain. Residues 104 to 112 (LGEGGFGKV) and Lys-127 contribute to the ATP site. Tyr-172 is subject to Phosphotyrosine. Catalysis depends on Asp-225, which acts as the Proton acceptor. Phosphoserine occurs at positions 229 and 259. A phosphothreonine mark is found at Thr-260 and Thr-265. Tyr-273 is modified (phosphotyrosine).

This sequence belongs to the protein kinase superfamily. Ser/Thr protein kinase family.

The protein resides in the cell membrane. The enzyme catalyses L-seryl-[protein] + ATP = O-phospho-L-seryl-[protein] + ADP + H(+). It catalyses the reaction L-threonyl-[protein] + ATP = O-phospho-L-threonyl-[protein] + ADP + H(+). Its function is as follows. May be involved in plant defense signaling. This is Probable serine/threonine-protein kinase PBL6 from Arabidopsis thaliana (Mouse-ear cress).